Consider the following 129-residue polypeptide: Large ribosomal subunit protein uL22 (129 aa).

The protein belongs to the universal ribosomal protein uL22 family. As to quaternary structure, part of the 50S ribosomal subunit.

This protein binds specifically to 23S rRNA; its binding is stimulated by other ribosomal proteins, e.g. L4, L17, and L20. It is important during the early stages of 50S assembly. It makes multiple contacts with different domains of the 23S rRNA in the assembled 50S subunit and ribosome. Its function is as follows. The globular domain of the protein is located near the polypeptide exit tunnel on the outside of the subunit, while an extended beta-hairpin is found that lines the wall of the exit tunnel in the center of the 70S ribosome. This is Large ribosomal subunit protein uL22 from Bartonella henselae (strain ATCC 49882 / DSM 28221 / CCUG 30454 / Houston 1) (Rochalimaea henselae).